Reading from the N-terminus, the 137-residue chain is Large ribosomal subunit protein uL16 (137 aa).

Belongs to the universal ribosomal protein uL16 family. In terms of assembly, part of the 50S ribosomal subunit.

Its function is as follows. Binds 23S rRNA and is also seen to make contacts with the A and possibly P site tRNAs. This chain is Large ribosomal subunit protein uL16, found in Anaplasma phagocytophilum (strain HZ).